A 285-amino-acid chain; its full sequence is Iodotyrosine deiodinase 1 (285 aa).

Residues 1 to 21 form a helical membrane-spanning segment; sequence MFLLTPVLVAVVCILVVWVFK. FMN-binding positions include 96-100 and 124-125; these read RRSVR and SG. The 3,5-diiodo-L-tyrosine site is built by Ala-126, Glu-153, Tyr-157, and Lys-178. Ala-126, Glu-153, Tyr-157, and Lys-178 together coordinate 3-iodo-L-tyrosine. FMN contacts are provided by residues 233–235 and Arg-275; that span reads TTT.

Belongs to the nitroreductase family. Homodimer. It depends on FMN as a cofactor.

It is found in the cell membrane. Its subcellular location is the cytoplasmic vesicle membrane. It carries out the reaction 2 iodide + L-tyrosine + 2 NADP(+) = 3,5-diiodo-L-tyrosine + 2 NADPH + H(+). The catalysed reaction is iodide + L-tyrosine + NADP(+) = 3-iodo-L-tyrosine + NADPH. It catalyses the reaction 3-iodo-L-tyrosine + iodide + NADP(+) = 3,5-diiodo-L-tyrosine + NADPH + H(+). The enzyme catalyses L-tyrosine + chloride + NADP(+) = 3-chloro-L-tyrosine + NADPH. It carries out the reaction bromide + L-tyrosine + NADP(+) = 3-bromo-L-tyrosine + NADPH. In terms of biological role, catalyzes the dehalogenation of halotyrosines such as 3-bromo-L-tyrosine, 3-chloro-L-tyrosine, 3-iodo-L-tyrosine and 3,5-diiodo-L-tyrosine. During thyroid hormone biosynthesis, facilitates iodide salvage by catalysing the oxidative NADPH-dependent deiodination of the halogenated by-products of thyroid hormone production, monoiodotyrosine (L-MIT) and diiodotyrosine (L-DIT). The scavanged iodide can then reenter the hormone-producing pathways. Acts more efficiently on 3-iodo-L-tyrosine than 3,5-diiodo-L-tyrosine. This Mus musculus (Mouse) protein is Iodotyrosine deiodinase 1 (Iyd).